A 1107-amino-acid polypeptide reads, in one-letter code: RNA-dependent RNA polymerase 1 (1107 aa).

The protein belongs to the RdRP family.

The enzyme catalyses RNA(n) + a ribonucleoside 5'-triphosphate = RNA(n+1) + diphosphate. Functionally, RNA-dependent direct polymerase involved in antiviral silencing. Required for the production of some small RNAs (mainly 21 and some 22 nucleotides) derived from the crucifer-infecting tobamovirus (TMV-cg). Required for turnip mosaic virus (TuMV) silencing and accumulation of viral siRNAs. Involved in cucumber mosaic virus (CMV) silencing. Required for the biogenesis of viral secondary siRNAs, process that follows the production of primary siRNAs derived from viral RNA replication. Specifically targets the positive-strand of the 3 RNA genomes of CMV and preferentially amplifies the 5'-terminal siRNAs of each viral genomic RNA. Not involved in the production of siRNAs derived from a single-stranded 336-nucleotide satellite RNA of CMV. The protein is RNA-dependent RNA polymerase 1 (RDR1) of Arabidopsis thaliana (Mouse-ear cress).